The sequence spans 402 residues: C2H2 finger domain transcription factor CON7 (402 aa).

The interval 1 to 247 (MLASSRQPRH…GAQQHKRPRR (247 aa)) is disordered. 2 stretches are compositionally biased toward polar residues: residues 19–49 (LSSS…TSVG) and 72–86 (CGDN…TVDT). The segment covering 87-98 (SSAAQYNASAQQ) has biased composition (low complexity). 2 stretches are compositionally biased toward polar residues: residues 99–116 (EVRS…TPTS) and 125–151 (ARSS…SSGD). Residues 256–282 (YKCGWQGCEKAYGTLNHLNAHVTMQSH) form a C2H2-type zinc finger. The stretch at 289–323 (EEFKEIRKEWKARKKEEEAARKADEERQRQAAQSQ) forms a coiled coil. The segment covering 302–317 (KKEEEAARKADEERQR) has biased composition (basic and acidic residues). The tract at residues 302–402 (KKEEEAARKA…GSNQAMYNQR (101 aa)) is disordered. Composition is skewed to polar residues over residues 322 to 341 (SQGG…SSNG), 363 to 373 (AATSTSVQQQP), and 392 to 402 (GGSNQAMYNQR).

It is found in the nucleus. In terms of biological role, transcription factor that plays a central role in appressorium formation and pathogenicity. Required for the expression of a large set of genes including factors that might play a role in membrane metabolism and ergosterol biosynthesis, the chitin-binding protein CBP1,as well as CHS7 that is essential for normal pathogenic development. In Pyricularia oryzae (strain 70-15 / ATCC MYA-4617 / FGSC 8958) (Rice blast fungus), this protein is C2H2 finger domain transcription factor CON7.